The chain runs to 142 residues: Large ribosomal subunit protein uL11 (142 aa).

Belongs to the universal ribosomal protein uL11 family. In terms of assembly, part of the ribosomal stalk of the 50S ribosomal subunit. Interacts with L10 and the large rRNA to form the base of the stalk. L10 forms an elongated spine to which L12 dimers bind in a sequential fashion forming a multimeric L10(L12)X complex. Post-translationally, one or more lysine residues are methylated.

Functionally, forms part of the ribosomal stalk which helps the ribosome interact with GTP-bound translation factors. The polypeptide is Large ribosomal subunit protein uL11 (Liberibacter asiaticus (Citrus greening disease)).